The following is a 294-amino-acid chain: 2,4-diacetylphloroglucinol hydrolase (294 aa).

The Zn(2+) site is built by H129, E160, H270, and E274.

This sequence belongs to the DAPG/phloretin hydrolase family. Homodimer. Requires Zn(2+) as cofactor.

The enzyme catalyses 2,4-diacetylphloroglucinol + H2O = 2-acetylphloroglucinol + acetate. Specifically and significantly activated by CoCl(2). Competitively inhibited by MAPG, but not by 2-hydroxy- and 4-hydroxyacetophenone. Functionally, hydrolase that specifically degrades the potent antimicrobial compound 2,4-diacetylphloroglucinol (DAPG) to equimolar amounts of mildly toxic monoacetylphloroglucinol (MAPG) and acetate. In Pseudomonas sp, this protein is 2,4-diacetylphloroglucinol hydrolase.